The sequence spans 200 residues: Small ribosomal subunit protein uS4 (200 aa).

Residues T22 to K43 form a disordered region. In terms of domain architecture, S4 RNA-binding spans Q92 to E170.

It belongs to the universal ribosomal protein uS4 family. In terms of assembly, part of the 30S ribosomal subunit. Contacts protein S5. The interaction surface between S4 and S5 is involved in control of translational fidelity.

One of the primary rRNA binding proteins, it binds directly to 16S rRNA where it nucleates assembly of the body of the 30S subunit. Functionally, with S5 and S12 plays an important role in translational accuracy. This chain is Small ribosomal subunit protein uS4, found in Listeria monocytogenes serotype 4a (strain HCC23).